A 54-amino-acid polypeptide reads, in one-letter code: MASKKGNRIIIKMRSTESAHTYTTTKNRKNDPNRLELRRYDPTLRRHVLYRETK.

The protein belongs to the bacterial ribosomal protein bL33 family.

This chain is Large ribosomal subunit protein bL33, found in Roseiflexus castenholzii (strain DSM 13941 / HLO8).